Here is a 526-residue protein sequence, read N- to C-terminus: Chaperonin GroEL, chloroplastic (526 aa).

ATP-binding positions include 29 to 32, 86 to 90, G412, 476 to 478, and D492; these read TLGP, DGTTT, and DAA.

The protein belongs to the chaperonin (HSP60) family. As to quaternary structure, forms a cylinder of 14 subunits composed of two heptameric rings stacked back-to-back. Interacts with the co-chaperonin GroES.

The protein localises to the plastid. The protein resides in the chloroplast. The catalysed reaction is ATP + H2O + a folded polypeptide = ADP + phosphate + an unfolded polypeptide.. Its function is as follows. Together with its co-chaperonin GroES, plays an essential role in assisting protein folding. The GroEL-GroES system forms a nano-cage that allows encapsulation of the non-native substrate proteins and provides a physical environment optimized to promote and accelerate protein folding. The protein is Chaperonin GroEL, chloroplastic of Cyanidioschyzon merolae (strain NIES-3377 / 10D) (Unicellular red alga).